We begin with the raw amino-acid sequence, 130 residues long: Cystatin domain-containing protein 1 (130 aa).

The first 23 residues, 1-23 (MSWKVPMLVGLVVLGTHIWTINK), serve as a signal peptide directing secretion. One can recognise a Cystatin domain in the interval 37 to 116 (ASVEFAVAQF…CVFQVDARPW (80 aa)). Intrachain disulfides connect Cys-84–Cys-94 and Cys-107–Cys-127.

It belongs to the cystatin family.

It is found in the secreted. May play a specialized role in spermatogenesis. The sequence is that of Cystatin domain-containing protein 1 from Rattus norvegicus (Rat).